A 50-amino-acid polypeptide reads, in one-letter code: Metallothionein zym1 (50 aa).

The Zn(2+) site is built by Cys-7, Cys-15, Cys-17, Cys-21, Cys-23, Cys-26, Cys-30, Cys-32, Cys-40, Cys-42, Cys-45, and Cys-47.

It belongs to the metallothionein superfamily.

It is found in the cytoplasm. Its subcellular location is the nucleus. Its function is as follows. Metallothionein involved in tolerance to zinc and cadmium. Binds four zinc ions. In Schizosaccharomyces pombe (strain 972 / ATCC 24843) (Fission yeast), this protein is Metallothionein zym1 (zym1).